The following is a 116-amino-acid chain: Ribosome-binding factor A (116 aa).

It belongs to the RbfA family. As to quaternary structure, monomer. Binds 30S ribosomal subunits, but not 50S ribosomal subunits or 70S ribosomes.

The protein resides in the cytoplasm. One of several proteins that assist in the late maturation steps of the functional core of the 30S ribosomal subunit. Associates with free 30S ribosomal subunits (but not with 30S subunits that are part of 70S ribosomes or polysomes). Required for efficient processing of 16S rRNA. May interact with the 5'-terminal helix region of 16S rRNA. The polypeptide is Ribosome-binding factor A (Streptococcus pneumoniae serotype 4 (strain ATCC BAA-334 / TIGR4)).